The chain runs to 503 residues: Cytochrome P450 monooxygenase lnbC (503 aa).

Residues 14 to 34 (VVLLLSSVWIAVHLVLAAYNV) form a helical membrane-spanning segment. Residues Asn94 and Asn169 are each glycosylated (N-linked (GlcNAc...) asparagine). Residue Cys446 coordinates heme.

Belongs to the cytochrome P450 family. It depends on heme as a cofactor.

Its subcellular location is the membrane. It participates in secondary metabolite biosynthesis. Cytochrome P450 monooxygenase; part of the lnb gene cluster that mediates the biosynthesis of diastereomeric piperazines. Lna and lnb clusters encode sets of enzymes that produce overlapping sets of previously undescribed metabolites such as piperazinomycin-like metabolites or morpholine. The lna and lnb biosynthetic pathways appear to be part of a signaling network that controls the formation of sclerotia, a resilient overwintering structure. One primary function of the non-canonical nonribosomal peptide synthetases lnaA and lnbA consists in the reduction of L-tyrosine. The presence in the clusters of tailoring enzymes such as the oxidoreductases lnaB, lnbB, lnaE or lnbE, as well as of the cytochrome P450 monooxygenases lnaC, lnaD, or lnbC, might explain formation of various diastereomeric piperazines. This is Cytochrome P450 monooxygenase lnbC from Aspergillus flavus (strain ATCC 200026 / FGSC A1120 / IAM 13836 / NRRL 3357 / JCM 12722 / SRRC 167).